A 1137-amino-acid chain; its full sequence is Receptor-type guanylate cyclase gcy-1 (1137 aa).

The first 18 residues, 1–18 (MQIFTILLLFNIFPSIFV), serve as a signal peptide directing secretion. Topologically, residues 19 to 494 (QNLPDTTVAP…CPVSFWEQYK (476 aa)) are extracellular. Asparagine 219, asparagine 348, asparagine 358, asparagine 384, asparagine 417, and asparagine 451 each carry an N-linked (GlcNAc...) asparagine glycan. A helical transmembrane segment spans residues 495 to 515 (ILIFVAIAVIVLMVLIMIIGC). Residues 516-1137 (LCVISGKRAE…FKMDTLKVAN (622 aa)) lie on the Cytoplasmic side of the membrane. In terms of domain architecture, Protein kinase spans 557-826 (LQSAPSISTG…ENICSQMKGL (270 aa)). The stretch at 840-871 (NMLEEYTSTLEEEIEERTKELTLEKKKADILL) forms a coiled coil. The Guanylate cyclase domain occupies 898–1028 (TVFFSDVVKF…DTVNTASRME (131 aa)). The tract at residues 1086–1122 (ELRSISNRSTPPVTNDRWIPNPSSSHGSRPSSVYDPL) is disordered. Positions 1088-1098 (RSISNRSTPPV) are enriched in polar residues. Residues 1105–1117 (PNPSSSHGSRPSS) are compositionally biased toward low complexity.

Belongs to the adenylyl cyclase class-4/guanylyl cyclase family. In terms of tissue distribution, expressed predominantly in sensory neurons. Expressed asymmetrically in the right ASE (ASER) neuron and bilaterally in ASI and URX neurons. Expressed in PVT and bilaterally in AIY non-sensory neurons. Expressed in intestine.

The protein localises to the membrane. The enzyme catalyses GTP = 3',5'-cyclic GMP + diphosphate. Functionally, guanylate cyclase involved in the production of the second messenger cGMP. Involved in the sensing of K+ gradient by the ASE right (ASER) sensory neuron. This is Receptor-type guanylate cyclase gcy-1 (gcy-1) from Caenorhabditis elegans.